A 408-amino-acid polypeptide reads, in one-letter code: MDTIKVLNNKNITDVPYFKAIGVASGIKGNNKSDLCVIYSEKPCIAAGTFTTNKVKAAPVLLDLKHIESENIYAIVANSGNANACTGDDGYEKAYLMAECTAKHLKIKPEEVLVASTGVIGVPLPIDKVMFGIEKAFSILPKSDANKAIDAIMTTDTVQKKIFVEFMLDKKKVTICAIAKGSGMIHPNMATMLSFIVTDANITKDLLNKALKESVKDSYNMISVDRDTSTNDMALLLANGASGNTLISSENSDYEVFKKALHYVNVEISKMIAKDGEGATKLIEAKVFGASSSRDAKVAAKSVITSNLVKAAVFGSDANWGRIICALGYSAAEIDPSKVDISFSNNDSKVETCLKGTGLNFDEEAAKKILDGDHVIIEVNLNNGKFNATAWGCDLTYDYVKINGSYRS.

Residues Thr154, Lys180, Thr191, Glu277, Asn403, and Ser408 each coordinate substrate. Residue Thr191 is the Nucleophile of the active site.

This sequence belongs to the ArgJ family. Heterotetramer of two alpha and two beta chains.

It localises to the cytoplasm. The enzyme catalyses N(2)-acetyl-L-ornithine + L-glutamate = N-acetyl-L-glutamate + L-ornithine. It carries out the reaction L-glutamate + acetyl-CoA = N-acetyl-L-glutamate + CoA + H(+). Its pathway is amino-acid biosynthesis; L-arginine biosynthesis; L-ornithine and N-acetyl-L-glutamate from L-glutamate and N(2)-acetyl-L-ornithine (cyclic): step 1/1. The protein operates within amino-acid biosynthesis; L-arginine biosynthesis; N(2)-acetyl-L-ornithine from L-glutamate: step 1/4. Catalyzes two activities which are involved in the cyclic version of arginine biosynthesis: the synthesis of N-acetylglutamate from glutamate and acetyl-CoA as the acetyl donor, and of ornithine by transacetylation between N(2)-acetylornithine and glutamate. The sequence is that of Arginine biosynthesis bifunctional protein ArgJ 1 from Clostridium acetobutylicum (strain ATCC 824 / DSM 792 / JCM 1419 / IAM 19013 / LMG 5710 / NBRC 13948 / NRRL B-527 / VKM B-1787 / 2291 / W).